Here is an 816-residue protein sequence, read N- to C-terminus: Mitogen-activated protein kinase 7 (816 aa).

The tract at residues 1-26 (MAEPLKEEDGEDGSAEPPGPVKAEPA) is disordered. N-acetylalanine is present on alanine 2. The required for cytoplasmic targeting stretch occupies residues 2 to 77 (AEPLKEEDGE…VVSSARRRLT (76 aa)). A Protein kinase domain is found at 55–347 (YEIIETIGNG…AAAALRHPFL (293 aa)). Residues 61–69 (IGNGAYGVV) and lysine 84 contribute to the ATP site. The segment at 78-139 (GQQVAIKKIP…FKSVYVVLDL (62 aa)) is required for binding to MAP2K5. The segment at 140 to 406 (MESDLHQIIH…QQIRFQPSLQ (267 aa)) is necessary for oligomerization. Catalysis depends on aspartate 182, which acts as the Proton acceptor. The short motif at 219 to 221 (TEY) is the TXY element. Residues 406–737 (QPVASEPGCP…PVFSGTPKGS (332 aa)) are disordered. The interval 407-806 (PVASEPGCPD…REIQMDSPML (400 aa)) is may not be required for kinase activity; required to stimulate MEF2C activity. 2 stretches are compositionally biased toward pro residues: residues 433–445 (SPPP…PGPA) and 454–463 (QPPPPVSEPA). Over residues 476–486 (KAALKAALLKS) the composition is skewed to low complexity. Basic and acidic residues-rich tracts occupy residues 502–519 (PEPR…EREE), 527–544 (RAKE…KERG), and 563–573 (DNDRSLLERWT). The Nuclear localization signal motif lies at 505 to 539 (RKPVTAQERQREREEKRRRRQERAKEREKRRQERE). The segment covering 578–587 (PAAPALTSVP) has biased composition (low complexity). Pro residues-rich tracts occupy residues 588 to 610 (APAP…PGPV) and 628 to 655 (VPQP…PAPP). Over residues 676–685 (PGSSTPGVLP) the composition is skewed to low complexity. Residues 686–695 (YFPPGLPPPD) are compositionally biased toward pro residues. Residues 701 to 720 (QSSMSESPDVNLVTQQLSKS) are compositionally biased toward polar residues. Position 720 is a phosphoserine (serine 720). A Phosphothreonine modification is found at threonine 733.

It belongs to the protein kinase superfamily. CMGC Ser/Thr protein kinase family. MAP kinase subfamily. As to quaternary structure, interacts with MAP2K5. Forms oligomers. Interacts with MEF2A, MEF2C and MEF2D; the interaction phosphorylates the MEF2s and enhances transcriptional activity of MEF2A, MEF2C but not MEF2D. Interacts with SGK1. Preferentially interacts with PML isoform PML-4 but shows interaction also with its other isoforms: isoform PML-1, isoform PML-2, isoform PML-3 and isoform PML-6. Interacts (via N-terminal half) with HSP90AB1-CDC37 chaperone complex in resting cells; the interaction is MAP2K5-independent and prevents MAPK7 from ubiquitination and proteasomal degradation. Interacts with STUB1/CHIP; the interaction is enhanced in the presence of IGF1 or MAP2K5 and promotes STUB1/CHIP E3 ligase activity. It depends on Mg(2+) as a cofactor. In terms of processing, dually phosphorylated on Thr-219 and Tyr-221, which activates the enzyme. Autophosphorylated in vitro on threonine and tyrosine residues when the C-terminal part of the kinase, which could have a regulatory role, is absent. As to expression, expressed in many adult tissues. Abundant in heart, placenta, lung, kidney and skeletal muscle. Not detectable in liver.

It is found in the cytoplasm. The protein resides in the nucleus. The protein localises to the PML body. It carries out the reaction L-seryl-[protein] + ATP = O-phospho-L-seryl-[protein] + ADP + H(+). The catalysed reaction is L-threonyl-[protein] + ATP = O-phospho-L-threonyl-[protein] + ADP + H(+). Its activity is regulated as follows. Activated by tyrosine and threonine phosphorylation. Activated in response to hyperosmolarity, hydrogen peroxide, and epidermal growth factor (EGF). Functionally, plays a role in various cellular processes such as proliferation, differentiation and cell survival. The upstream activator of MAPK7 is the MAPK kinase MAP2K5. Upon activation, it translocates to the nucleus and phosphorylates various downstream targets including MEF2C. EGF activates MAPK7 through a Ras-independent and MAP2K5-dependent pathway. As part of the MAPK/ERK signaling pathway, acts as a negative regulator of apoptosis in cardiomyocytes via interaction with STUB1/CHIP and promotion of STUB1-mediated ubiquitination and degradation of ICER-type isoforms of CREM. May have a role in muscle cell differentiation. May be important for endothelial function and maintenance of blood vessel integrity. MAP2K5 and MAPK7 interact specifically with one another and not with MEK1/ERK1 or MEK2/ERK2 pathways. Phosphorylates SGK1 at Ser-78 and this is required for growth factor-induced cell cycle progression. Involved in the regulation of p53/TP53 by disrupting the PML-MDM2 interaction. The chain is Mitogen-activated protein kinase 7 (MAPK7) from Homo sapiens (Human).